The sequence spans 76 residues: Sulfur carrier protein TusA (76 aa).

Cysteine 14 serves as the catalytic Cysteine persulfide intermediate.

It belongs to the sulfur carrier protein TusA family. As to quaternary structure, interacts with IscS.

It is found in the cytoplasm. The protein operates within tRNA modification. Its function is as follows. Sulfur carrier protein involved in sulfur trafficking in the cell. Part of a sulfur-relay system required for 2-thiolation during synthesis of 2-thiouridine of the modified wobble base 5-methylaminomethyl-2-thiouridine (mnm(5)s(2)U) in tRNA. Interacts with IscS and stimulates its cysteine desulfurase activity. Accepts an activated sulfur from IscS, which is then transferred to TusD, and thus determines the direction of sulfur flow from IscS to 2-thiouridine formation. Also appears to be involved in sulfur transfer for the biosynthesis of molybdopterin. The polypeptide is Sulfur carrier protein TusA (Buchnera aphidicola subsp. Acyrthosiphon pisum (strain Tuc7)).